We begin with the raw amino-acid sequence, 378 residues long: Acetylornithine deacetylase (378 aa).

Zn(2+) is bound at residue histidine 76. Aspartate 78 is an active-site residue. Residue aspartate 108 participates in Zn(2+) binding. Residue glutamate 140 is part of the active site. Residues glutamate 141, glutamate 165, and histidine 351 each coordinate Zn(2+).

This sequence belongs to the peptidase M20A family. ArgE subfamily. As to quaternary structure, homodimer. Requires Zn(2+) as cofactor. Co(2+) is required as a cofactor. The cofactor is glutathione.

The protein localises to the cytoplasm. It carries out the reaction N(2)-acetyl-L-ornithine + H2O = L-ornithine + acetate. The protein operates within amino-acid biosynthesis; L-arginine biosynthesis; L-ornithine from N(2)-acetyl-L-ornithine (linear): step 1/1. Its function is as follows. Catalyzes the hydrolysis of the amide bond of N(2)-acetylated L-amino acids. Cleaves the acetyl group from N-acetyl-L-ornithine to form L-ornithine, an intermediate in L-arginine biosynthesis pathway, and a branchpoint in the synthesis of polyamines. This is Acetylornithine deacetylase from Aliivibrio salmonicida (strain LFI1238) (Vibrio salmonicida (strain LFI1238)).